The sequence spans 272 residues: Homeobox protein SIX3 (272 aa).

The homeobox DNA-binding region spans 169-228 (GEQKTHCFKERTRGLLREWYLQDPYPNPGKKRELAHATGLTPTQVGNWFKNRRQRDRAAA). A disordered region spans residues 244 to 272 (CTLSGGDSSERADGDTFLSVTDSDSDLDV).

This sequence belongs to the SIX/Sine oculis homeobox family. Interacts with GMNN.

The protein localises to the nucleus. Its function is as follows. Transcriptional regulator which can act as both a transcriptional repressor and activator by binding a ATTA homeodomain core recognition sequence on these target genes. During forebrain development represses WNT1 expression allowing zona limitans intrathalamica formation and thereby ensuring proper anterio-posterior patterning of the diencephalon and formation of the rostral diencephalon. Acts as a direct upstream activator of SHH expression in the rostral diencephalon ventral midline and that in turn SHH maintains its expression. In addition, Six3 activity is required for the formation of the telencephalon. During postnatal stages of brain development is necessary for ependymal cell maturation by promoting the maturation of radial glia into ependymal cells through regulation of neuroblast proliferation and migration. Acts on the proliferation and differentiation of neural progenitor cells through activating transcription of CCND1 and CCND2. During early lens formation plays a role in lens induction and specification by activating directly PAX6 in the presumptive lens ectoderm. In turn PAX6 activates SIX3 resulting in activation of PDGFRA and CCND1 promoting cell proliferation. Also is required for the neuroretina development by directly suppressing WNT8B expression in the anterior neural plate territory. Its action during retina development and lens morphogenesis is AES and TLE4-dependent manner. Furthermore, during eye development regulates several genes expression. Before and during early lens development represses the CRYGF promoter by binding a SIX repressor element. Directly activates RHO transcription, or cooperates with CRX or NRL. Six3 also functions in the formation of the proximodistal axis of the optic cup, and promotes the formation of optic vesicles-like structures. During pituitary development, acts in parallel or alternatively with HESX1 to control cell proliferation through Wnt/beta-catenin pathway. Plays a role in eye development by suppressing WNT1 expression and in dorsal-ventral patterning by repressing BMP signaling pathway. This is Homeobox protein SIX3 (six3) from Oryzias latipes (Japanese rice fish).